Consider the following 142-residue polypeptide: Large ribosomal subunit protein uL16 (142 aa).

Belongs to the universal ribosomal protein uL16 family. As to quaternary structure, part of the 50S ribosomal subunit.

In terms of biological role, binds 23S rRNA and is also seen to make contacts with the A and possibly P site tRNAs. The chain is Large ribosomal subunit protein uL16 from Aquifex aeolicus (strain VF5).